Reading from the N-terminus, the 500-residue chain is uncharacterized protein (500 aa).

This is an uncharacterized protein from Halorubrum sp. PV6 (HRPV-1).